The primary structure comprises 337 residues: Probable dual-specificity RNA methyltransferase RlmN (337 aa).

Catalysis depends on glutamate 88, which acts as the Proton acceptor. The region spanning 94-324 (SEKRLTVCVS…VRYSRGLATD (231 aa)) is the Radical SAM core domain. Cysteine 101 and cysteine 327 are joined by a disulfide. 3 residues coordinate [4Fe-4S] cluster: cysteine 108, cysteine 112, and cysteine 115. S-adenosyl-L-methionine-binding positions include 155–156 (GE), serine 185, 208–210 (SLH), and asparagine 284. Cysteine 327 serves as the catalytic S-methylcysteine intermediate.

It belongs to the radical SAM superfamily. RlmN family. [4Fe-4S] cluster serves as cofactor.

The protein localises to the cytoplasm. The catalysed reaction is adenosine(2503) in 23S rRNA + 2 reduced [2Fe-2S]-[ferredoxin] + 2 S-adenosyl-L-methionine = 2-methyladenosine(2503) in 23S rRNA + 5'-deoxyadenosine + L-methionine + 2 oxidized [2Fe-2S]-[ferredoxin] + S-adenosyl-L-homocysteine. It carries out the reaction adenosine(37) in tRNA + 2 reduced [2Fe-2S]-[ferredoxin] + 2 S-adenosyl-L-methionine = 2-methyladenosine(37) in tRNA + 5'-deoxyadenosine + L-methionine + 2 oxidized [2Fe-2S]-[ferredoxin] + S-adenosyl-L-homocysteine. In terms of biological role, specifically methylates position 2 of adenine 2503 in 23S rRNA and position 2 of adenine 37 in tRNAs. This is Probable dual-specificity RNA methyltransferase RlmN from Microcystis aeruginosa (strain NIES-843 / IAM M-2473).